Reading from the N-terminus, the 55-residue chain is Large ribosomal subunit protein bL33 (55 aa).

This sequence belongs to the bacterial ribosomal protein bL33 family.

This is Large ribosomal subunit protein bL33 from Sinorhizobium medicae (strain WSM419) (Ensifer medicae).